The primary structure comprises 188 residues: Threonylcarbamoyl-AMP synthase (188 aa).

Residues Glu8–Ala188 enclose the YrdC-like domain.

The protein belongs to the SUA5 family. TsaC subfamily.

It is found in the cytoplasm. It catalyses the reaction L-threonine + hydrogencarbonate + ATP = L-threonylcarbamoyladenylate + diphosphate + H2O. Required for the formation of a threonylcarbamoyl group on adenosine at position 37 (t(6)A37) in tRNAs that read codons beginning with adenine. Catalyzes the conversion of L-threonine, HCO(3)(-)/CO(2) and ATP to give threonylcarbamoyl-AMP (TC-AMP) as the acyladenylate intermediate, with the release of diphosphate. This chain is Threonylcarbamoyl-AMP synthase, found in Thiobacillus denitrificans (strain ATCC 25259 / T1).